The sequence spans 552 residues: Small ribosomal subunit protein bS1 (552 aa).

S1 motif domains are found at residues 31–101 (TIKE…ISQQ), 116–179 (NAII…ISRK), 200–268 (TEPV…LSIK), 285–355 (GYAI…VSLK), 372–440 (GDIV…LSAK), and 457–521 (DSVI…ASVH).

Belongs to the bacterial ribosomal protein bS1 family.

Its function is as follows. Binds mRNA; thus facilitating recognition of the initiation point. It is needed to translate mRNA with a short Shine-Dalgarno (SD) purine-rich sequence. This is Small ribosomal subunit protein bS1 (rpsA) from Helicobacter pylori (strain J99 / ATCC 700824) (Campylobacter pylori J99).